We begin with the raw amino-acid sequence, 206 residues long: Reticulon-like protein B13 (206 aa).

The region spanning 16–206 (VEDIYLWRRK…GTEEKVKKSE (191 aa)) is the Reticulon domain. The next 3 helical transmembrane spans lie at 27–47 (LAFS…FYGF), 50–70 (ITIV…WGSL), and 134–154 (IGNL…GLTV).

The protein localises to the endoplasmic reticulum membrane. The polypeptide is Reticulon-like protein B13 (RTNLB13) (Arabidopsis thaliana (Mouse-ear cress)).